Consider the following 736-residue polypeptide: Acyl-coenzyme A oxidase (736 aa).

The protein belongs to the acyl-CoA oxidase family. The cofactor is FAD.

The protein resides in the peroxisome. The catalysed reaction is a 2,3-saturated acyl-CoA + O2 = a (2E)-enoyl-CoA + H2O2. The protein operates within lipid metabolism; peroxisomal fatty acid beta-oxidation. The protein is Acyl-coenzyme A oxidase (POX1) of Kluyveromyces lactis (strain ATCC 8585 / CBS 2359 / DSM 70799 / NBRC 1267 / NRRL Y-1140 / WM37) (Yeast).